Here is a 296-residue protein sequence, read N- to C-terminus: Lipoyl synthase (296 aa).

The [4Fe-4S] cluster site is built by cysteine 34, cysteine 39, cysteine 45, cysteine 60, cysteine 64, cysteine 67, and serine 276. The Radical SAM core domain maps to 46-265 (WGEGTATFMI…GEVALSMGFK (220 aa)).

Belongs to the radical SAM superfamily. Lipoyl synthase family. The cofactor is [4Fe-4S] cluster.

It is found in the cytoplasm. It catalyses the reaction [[Fe-S] cluster scaffold protein carrying a second [4Fe-4S](2+) cluster] + N(6)-octanoyl-L-lysyl-[protein] + 2 oxidized [2Fe-2S]-[ferredoxin] + 2 S-adenosyl-L-methionine + 4 H(+) = [[Fe-S] cluster scaffold protein] + N(6)-[(R)-dihydrolipoyl]-L-lysyl-[protein] + 4 Fe(3+) + 2 hydrogen sulfide + 2 5'-deoxyadenosine + 2 L-methionine + 2 reduced [2Fe-2S]-[ferredoxin]. It participates in protein modification; protein lipoylation via endogenous pathway; protein N(6)-(lipoyl)lysine from octanoyl-[acyl-carrier-protein]: step 2/2. In terms of biological role, catalyzes the radical-mediated insertion of two sulfur atoms into the C-6 and C-8 positions of the octanoyl moiety bound to the lipoyl domains of lipoate-dependent enzymes, thereby converting the octanoylated domains into lipoylated derivatives. This Pyrobaculum arsenaticum (strain DSM 13514 / JCM 11321 / PZ6) protein is Lipoyl synthase.